Reading from the N-terminus, the 342-residue chain is Transcriptional regulator of the unfolded protein response hacA (342 aa).

Residues 1–105 (MEDNFASVVE…TSRERKRLEM (105 aa)) form a disordered region. 2 stretches are compositionally biased toward basic and acidic residues: residues 35–48 (PETK…EEKK) and 74–88 (KTED…ERVL). The 64-residue stretch at 80-143 (EQRRIERVLR…NRLSQQLAQL (64 aa)) folds into the bZIP domain. The segment at 82–135 (RRIERVLRNRAAAQTSRERKRLEMEKLENEKIQMEQQNQFLLQRLSQMEAENNR) is basic motif. Residues 136 to 143 (LSQQLAQL) form a leucine-zipper region. Disordered stretches follow at residues 146 to 167 (EVRN…SPTL) and 306 to 330 (EPAH…GAST). Polar residues predominate over residues 315-330 (TPYQTSGLQPSLGAST).

Belongs to the bZIP family.

The protein resides in the nucleus. Master transcriptional regulator of the unfolded protein response (UPR) that recognizes and binds to the UPR element (UPRE) in the promoter of UPR-regulated genes. In the canonical UPR pathway, the ireA RNase splices the cytoplasmic mRNA hacA, which alters the reading frame to allow translation of the bZIP transcription factor hacA. Induces the expression of pmrA, scrA and spfA in response to UPR. This chain is Transcriptional regulator of the unfolded protein response hacA, found in Aspergillus fumigatus (strain ATCC MYA-4609 / CBS 101355 / FGSC A1100 / Af293) (Neosartorya fumigata).